A 297-amino-acid chain; its full sequence is uncharacterized protein (297 aa).

A run of 7 helical transmembrane segments spans residues 14–34 (LFLM…FLKF), 55–75 (LLLG…IYFF), 81–101 (FYFG…AGAL), 110–130 (AIIL…RVAF), 135–155 (LSTL…KLLF), 163–183 (IVGA…YGSI), and 208–228 (LIMT…SKCF).

The protein resides in the cell membrane. This is an uncharacterized protein from Methanocaldococcus jannaschii (strain ATCC 43067 / DSM 2661 / JAL-1 / JCM 10045 / NBRC 100440) (Methanococcus jannaschii).